The chain runs to 424 residues: 3-ketoacyl-CoA thiolase, peroxisomal (424 aa).

A peroxisome-targeting transit peptide spans 1–26 (MQRLQVVLGHLRGPADSGWMPQAAPC). The tract at residues 1 to 26 (MQRLQVVLGHLRGPADSGWMPQAAPC) is PTS2-type peroxisomal targeting signal. 2 positions are modified to phosphothreonine: Thr-59 and Thr-60. Cys-123 (acyl-thioester intermediate) is an active-site residue. Active-site proton acceptor residues include His-377 and Cys-408.

It belongs to the thiolase-like superfamily. Thiolase family. Homodimer. Interacts (via PTS2-type peroxisomal targeting signal region) with PEX7; leading to its translocation into peroxisomes.

Its subcellular location is the peroxisome. The catalysed reaction is an acyl-CoA + acetyl-CoA = a 3-oxoacyl-CoA + CoA. The enzyme catalyses 2 acetyl-CoA = acetoacetyl-CoA + CoA. It carries out the reaction tetradecanoyl-CoA + acetyl-CoA = 3-oxohexadecanoyl-CoA + CoA. It catalyses the reaction hexanoyl-CoA + acetyl-CoA = 3-oxooctanoyl-CoA + CoA. The catalysed reaction is 3-oxohexadecanedioyl-CoA + CoA = tetradecanedioyl-CoA + acetyl-CoA. The enzyme catalyses 3-oxo-(6Z,9Z,12Z,15Z,18Z,21Z)-tetracosahexaenoyl-CoA + CoA = (4Z,7Z,10Z,13Z,16Z,19Z)-docosahexaenoyl-CoA + acetyl-CoA. It participates in lipid metabolism; peroxisomal fatty acid beta-oxidation. Functionally, responsible for the thiolytic cleavage of straight chain 3-keto fatty acyl-CoAs (3-oxoacyl-CoAs). Plays an important role in fatty acid peroxisomal beta-oxidation. Catalyzes the cleavage of short, medium, long, and very long straight chain 3-oxoacyl-CoAs. The chain is 3-ketoacyl-CoA thiolase, peroxisomal from Homo sapiens (Human).